A 713-amino-acid chain; its full sequence is Protein tyrosine phosphatase domain-containing protein 1 (713 aa).

A Tyrosine-protein phosphatase domain is found at 80-251; the sequence is YSSWITDHLL…LVPLRSVFSC (172 aa). Cys-188 serves as the catalytic Phosphocysteine intermediate.

It belongs to the protein-tyrosine phosphatase family. Non-receptor class PTPDC1 subfamily.

May play roles in cilia formation and/or maintenance. This chain is Protein tyrosine phosphatase domain-containing protein 1 (ptpdc1), found in Danio rerio (Zebrafish).